The following is a 772-amino-acid chain: Polyribonucleotide nucleotidyltransferase (772 aa).

Positions 488 and 494 each coordinate Mg(2+). The KH domain occupies 555–614 (PRLTTLKINPEKIRDVIGKGGAVIRGLQEETGTTINIDEDGTITIASTDPEKAEFAKKRI). In terms of domain architecture, S1 motif spans 624–692 (GKVYEGPVTK…EKGRVKLSMK (69 aa)). Residues 690–772 (SMKALTERPA…QPYAPRDSQE (83 aa)) are disordered. Residues 703–740 (YSERPPREDRGDRGDRGGERRERSDRGDRGGDRGERAP) show a composition bias toward basic and acidic residues. Residues 743–757 (NSEQQQQPRSNEQQP) show a composition bias toward low complexity.

Belongs to the polyribonucleotide nucleotidyltransferase family. Mg(2+) is required as a cofactor.

The protein localises to the cytoplasm. It carries out the reaction RNA(n+1) + phosphate = RNA(n) + a ribonucleoside 5'-diphosphate. In terms of biological role, involved in mRNA degradation. Catalyzes the phosphorolysis of single-stranded polyribonucleotides processively in the 3'- to 5'-direction. In Variovorax paradoxus (strain S110), this protein is Polyribonucleotide nucleotidyltransferase.